Reading from the N-terminus, the 354-residue chain is Uroporphyrinogen decarboxylase (354 aa).

Residues 27–31 (RRAGR), phenylalanine 46, aspartate 77, tyrosine 154, threonine 209, and histidine 327 contribute to the substrate site.

The protein belongs to the uroporphyrinogen decarboxylase family. In terms of assembly, homodimer.

It localises to the cytoplasm. The enzyme catalyses uroporphyrinogen III + 4 H(+) = coproporphyrinogen III + 4 CO2. The protein operates within porphyrin-containing compound metabolism; protoporphyrin-IX biosynthesis; coproporphyrinogen-III from 5-aminolevulinate: step 4/4. Catalyzes the decarboxylation of four acetate groups of uroporphyrinogen-III to yield coproporphyrinogen-III. The protein is Uroporphyrinogen decarboxylase of Salmonella typhimurium (strain LT2 / SGSC1412 / ATCC 700720).